Reading from the N-terminus, the 506-residue chain is GPI mannosyltransferase 3 (506 aa).

N-linked (GlcNAc...) asparagine glycosylation is present at Asn115. Helical transmembrane passes span 180 to 200 (AFAC…LLFW), 229 to 249 (YGRL…NIIA), 257 to 277 (FVFP…SSLY), 285 to 305 (YLSQ…LLTM), 330 to 350 (FVYP…SSFS), and 358 to 378 (FFFL…RFHQ). Asn395 is a glycosylation site (N-linked (GlcNAc...) asparagine).

It belongs to the glycosyltransferase 22 family. PIGB subfamily.

It localises to the endoplasmic reticulum membrane. The protein operates within glycolipid biosynthesis; glycosylphosphatidylinositol-anchor biosynthesis. Mannosyltransferase involved in glycosylphosphatidylinositol-anchor biosynthesis. Transfers the third mannose to Man2-GlcN-acyl-PI during GPI precursor assembly. In Schizosaccharomyces pombe (strain 972 / ATCC 24843) (Fission yeast), this protein is GPI mannosyltransferase 3 (gpi10).